Here is a 957-residue protein sequence, read N- to C-terminus: Glycine dehydrogenase (decarboxylating) (957 aa).

An N6-(pyridoxal phosphate)lysine modification is found at Lys708.

It belongs to the GcvP family. As to quaternary structure, the glycine cleavage system is composed of four proteins: P, T, L and H. Requires pyridoxal 5'-phosphate as cofactor.

The enzyme catalyses N(6)-[(R)-lipoyl]-L-lysyl-[glycine-cleavage complex H protein] + glycine + H(+) = N(6)-[(R)-S(8)-aminomethyldihydrolipoyl]-L-lysyl-[glycine-cleavage complex H protein] + CO2. Its function is as follows. The glycine cleavage system catalyzes the degradation of glycine. The P protein binds the alpha-amino group of glycine through its pyridoxal phosphate cofactor; CO(2) is released and the remaining methylamine moiety is then transferred to the lipoamide cofactor of the H protein. This chain is Glycine dehydrogenase (decarboxylating), found in Salmonella newport (strain SL254).